Consider the following 80-residue polypeptide: Acyl carrier protein (80 aa).

The 76-residue stretch at 4-79 (EEIKDKVFDI…QAIDYIVNAK (76 aa)) folds into the Carrier domain. Ser-39 is subject to O-(pantetheine 4'-phosphoryl)serine.

It belongs to the acyl carrier protein (ACP) family. In terms of processing, 4'-phosphopantetheine is transferred from CoA to a specific serine of apo-ACP by AcpS. This modification is essential for activity because fatty acids are bound in thioester linkage to the sulfhydryl of the prosthetic group.

The protein localises to the cytoplasm. The protein operates within lipid metabolism; fatty acid biosynthesis. Carrier of the growing fatty acid chain in fatty acid biosynthesis. The chain is Acyl carrier protein from Prosthecochloris aestuarii (strain DSM 271 / SK 413).